The sequence spans 269 residues: Arginine and glutamate-rich protein 1-B (269 aa).

The span at 1–57 (MGRSRSRSSSRSKHSKTSKHSKKRSRSRSRSRDRERKRRSKSRESKRNRRRESRSRS) shows a compositional bias: basic residues. The necessary and sufficient for RNA binding stretch occupies residues 1 to 70 (MGRSRSRSSS…TATSRRDRER (70 aa)). Disordered regions lie at residues 1 to 109 (MGRS…MERQ) and 233 to 269 (RMKL…KASE). Basic and acidic residues-rich tracts occupy residues 64–80 (SRRD…RIDI), 89–109 (SAVD…MERQ), and 233–249 (RMKL…EEQK). Residues 71-269 (AASPPERIDI…KLSFSLKASE (199 aa)) form a necessary and sufficient for transcriptional regulation region.

The protein belongs to the ARGLU1 family.

Its subcellular location is the nucleus. It is found in the nucleus speckle. It localises to the chromosome. In terms of biological role, dual function regulator of gene expression; regulator of transcription and modulator of alternative splicing. General coactivator of nuclear receptor-induced gene expression. This is Arginine and glutamate-rich protein 1-B (arglu1b) from Danio rerio (Zebrafish).